Here is a 609-residue protein sequence, read N- to C-terminus: Alpha-glucosides permease MPH2 (609 aa).

Over 1-106 the chain is Cytoplasmic; sequence MKNLSFLINR…AAAWSLLVST (106 aa). A helical transmembrane segment spans residues 107-127; the sequence is TLIMEGYDTAILGAFYALPIF. At 128 to 142 the chain is on the extracellular side; sequence QRKFGSQNDKTGEWE. The chain crosses the membrane as a helical span at residues 143 to 163; it reads ISASWQIGLTLCYMAGEIVGL. At 164-178 the chain is on the cytoplasmic side; it reads QLTGPSVDLVGNRYT. The chain crosses the membrane as a helical span at residues 179 to 199; sequence LIIALFFLAAFTFILYFCNSL. Gly200 is a topological domain (extracellular). The chain crosses the membrane as a helical span at residues 201–221; the sequence is MIAVGQALCGMPWGCFQCLTV. At 222 to 234 the chain is on the cytoplasmic side; sequence SYASEICPLALRY. The helical transmembrane segment at 235–255 threads the bilayer; it reads YLTTYSNLCWLFGQLFAAGIM. The Extracellular portion of the chain corresponds to 256-270; it reads KNSQKKYADSELGYK. Residues 271-291 traverse the membrane as a helical segment; that stretch reads LPFALQWILPVPLALGIFFAP. The Cytoplasmic segment spans residues 292-363; it reads ESPWWLVKKG…EDKINRRRTR (72 aa). Residues 364–384 form a helical membrane-spanning segment; it reads ITCLCWAGQATCGSILIGYST. Over 385 to 397 the chain is Extracellular; the sequence is YFYEKAGVSTEMS. Residues 398-418 traverse the membrane as a helical segment; the sequence is FTFSIIQYCLGICATFLSWWA. Topologically, residues 419–426 are cytoplasmic; sequence SKYFGRYD. Residues 427–447 traverse the membrane as a helical segment; that stretch reads LYAFGLAFQTIVFFIIGGLGC. Residues 448–459 lie on the Extracellular side of the membrane; sequence SSTHGSKMGSGS. A helical membrane pass occupies residues 460–480; the sequence is LLMAVAFFYNLGIAPVVFCLV. The Cytoplasmic segment spans residues 481 to 492; the sequence is SEMPSSRLRTKT. Residues 493–513 traverse the membrane as a helical segment; it reads IILARNTYNVVSIICSVLILY. Residues 514 to 525 are Extracellular-facing; sequence QLNSKKWNWGAK. Residues 526–546 form a helical membrane-spanning segment; it reads SGFFWGVLCFCTLIWAVVDLP. The Cytoplasmic segment spans residues 547 to 609; it reads ETAGKTFVEI…QRNSNVSHHL (63 aa).

This sequence belongs to the major facilitator superfamily. Sugar transporter (TC 2.A.1.1) family.

The protein resides in the cell membrane. Functionally, high-affinity uptake of maltose and maltotriose. Also transports alpha-methylglucoside, glucose and turanose but not melezitose or trehalose. The chain is Alpha-glucosides permease MPH2 (MPH2) from Saccharomyces cerevisiae (strain ATCC 204508 / S288c) (Baker's yeast).